Consider the following 955-residue polypeptide: Reversion-inducing cysteine-rich protein with Kazal motifs (955 aa).

The signal sequence occupies residues 1–22; sequence MSGCLQILTVLLCCRFWALVFS. The stretch at 28-75 is one Knot 1 repeat; sequence CVHHAADIPRCRDACEQLASIRSESRLRHLLHRLPSYCPETLSELWIC. Residues 28 to 326 are 5 X Knot repeats; that stretch reads CVHHAADIPR…NPVEMDLITC (299 aa). The N-linked (GlcNAc...) asparagine glycan is linked to asparagine 77. Knot repeat units follow at residues 95–132 and 142–188; these read CCELAISAECRRDCKQASSKNDISKVCKKDTENPLYSC and CCSY…LILC. The N-linked (GlcNAc...) asparagine glycan is linked to asparagine 191. Knot repeat units follow at residues 207-254 and 282-326; these read CCDR…LWQC and CCFK…LITC. 2 N-linked (GlcNAc...) asparagine glycosylation sites follow: asparagine 287 and asparagine 375. Kazal-like domains are found at residues 615-661, 686-741, and 742-778; these read LFTG…SCRS, DLSE…HCQD, and ACRRPREVCAHNGESYSTVCEAFSERVAVDYQGRCHA. Cystine bridges form between cysteine 621–cysteine 646, cysteine 623–cysteine 642, cysteine 631–cysteine 659, cysteine 704–cysteine 724, and cysteine 713–cysteine 739. The GPI-anchor amidated serine moiety is linked to residue serine 931. Residues 932-955 constitute a propeptide that is removed on maturation; it reads SCVSISVCVLLLLCSLILTLTSDL.

The protein belongs to the RECK family. As to quaternary structure, interacts (via knot repeats) with wnt7a (via disordered linker region); the interaction is direct. Interacts (via knot repeats) with wnt7b (via disordered linker region); the interaction is direct. Interacts with adgra2; the interaction is direct. Expressed in the cerebral endothelium.

It is found in the cell membrane. Its function is as follows. Functions together with adgra2 to enable brain endothelial cells to selectively respond to Wnt7 signals (wnt7a or wnt7b). Plays a key role in Wnt7-specific responses: required for central nervous system (CNS) angiogenesis and blood-brain barrier regulation. Acts as a Wnt7-specific coactivator of canonical Wnt signaling by decoding Wnt ligands: acts by interacting specifically with the disordered linker region of Wnt7, thereby conferring ligand selectivity for Wnt7. Adgra2 is then required to deliver reck-bound Wnt7 to frizzled by assembling a higher-order RECK-ADGRA2-Fzd-LRP5-LRP6 complex. Also acts as a serine protease inhibitor. This chain is Reversion-inducing cysteine-rich protein with Kazal motifs, found in Danio rerio (Zebrafish).